The chain runs to 358 residues: Gap junction alpha-5 protein (358 aa).

Topologically, residues 1-19 are cytoplasmic; that stretch reads MGDWSFLGEFLEEVHKHST. Residues 20-40 form a helical membrane-spanning segment; that stretch reads VIGKVWLTVLFIFRMLVLGTA. Over 41–76 the chain is Extracellular; sequence AESSWGDEQADFQCDTMQPGCGNVCYDQAFPISHIR. The chain crosses the membrane as a helical span at residues 77–97; sequence YWVLQIIFVSTPSLVYMGHAM. The Cytoplasmic segment spans residues 98–164; sequence HTVRMQEKRK…CSILIRTTME (67 aa). Residues 165–185 traverse the membrane as a helical segment; sequence VAFIVGQYLLYGIFLDTLHVC. The Extracellular segment spans residues 186–205; it reads RRSPCPHPVNCYVSRPTEKN. The chain crosses the membrane as a helical span at residues 206–226; that stretch reads VFIVFMLAVAALSLFLSLAEL. The Cytoplasmic portion of the chain corresponds to 227–358; sequence YHLGWKKLRQ…SKARSDDLSV (132 aa). The tract at residues 318–358 is disordered; it reads AQKPEVPNGASPGHRLPHGYQSDKRRLSKASSKARSDDLSV. Phosphoserine is present on residues Ser353 and Ser357.

Belongs to the connexin family. Alpha-type (group II) subfamily. As to quaternary structure, a connexon is composed of a hexamer of connexins.

The protein localises to the cell membrane. It localises to the cell junction. The protein resides in the gap junction. Its function is as follows. One gap junction consists of a cluster of closely packed pairs of transmembrane channels, the connexons, through which materials of low MW diffuse from one cell to a neighboring cell. This chain is Gap junction alpha-5 protein (GJA5), found in Canis lupus familiaris (Dog).